We begin with the raw amino-acid sequence, 329 residues long: DNA-directed RNA polymerase subunit alpha (329 aa).

Positions 1 to 235 (MQGSVTEFLK…EQLEAFVDLR (235 aa)) are alpha N-terminal domain (alpha-NTD). The tract at residues 249–329 (FDPILLRPVD…NWPPASIADE (81 aa)) is alpha C-terminal domain (alpha-CTD).

The protein belongs to the RNA polymerase alpha chain family. Homodimer. The RNAP catalytic core consists of 2 alpha, 1 beta, 1 beta' and 1 omega subunit. When a sigma factor is associated with the core the holoenzyme is formed, which can initiate transcription.

It carries out the reaction RNA(n) + a ribonucleoside 5'-triphosphate = RNA(n+1) + diphosphate. In terms of biological role, DNA-dependent RNA polymerase catalyzes the transcription of DNA into RNA using the four ribonucleoside triphosphates as substrates. In Pectobacterium atrosepticum (strain SCRI 1043 / ATCC BAA-672) (Erwinia carotovora subsp. atroseptica), this protein is DNA-directed RNA polymerase subunit alpha.